The primary structure comprises 324 residues: Beta-ketoacyl-[acyl-carrier-protein] synthase III (324 aa).

Residues Cys-114 and His-251 contribute to the active site. Residues 252 to 256 are ACP-binding; the sequence is QANLR. Asn-281 is a catalytic residue.

It belongs to the thiolase-like superfamily. FabH family. Homodimer.

The protein resides in the cytoplasm. It catalyses the reaction malonyl-[ACP] + acetyl-CoA + H(+) = 3-oxobutanoyl-[ACP] + CO2 + CoA. Its pathway is lipid metabolism; fatty acid biosynthesis. Its function is as follows. Catalyzes the condensation reaction of fatty acid synthesis by the addition to an acyl acceptor of two carbons from malonyl-ACP. Catalyzes the first condensation reaction which initiates fatty acid synthesis and may therefore play a role in governing the total rate of fatty acid production. Possesses both acetoacetyl-ACP synthase and acetyl transacylase activities. Its substrate specificity determines the biosynthesis of branched-chain and/or straight-chain of fatty acids. The polypeptide is Beta-ketoacyl-[acyl-carrier-protein] synthase III (Rhodobacter capsulatus (Rhodopseudomonas capsulata)).